Here is a 212-residue protein sequence, read N- to C-terminus: Adenylate kinase (212 aa).

10–15 provides a ligand contact to ATP; sequence GAGKGT. Positions 30-59 are NMP; the sequence is STGDMFRAAMANQTEMGRLAKSYIDKGELV. AMP is bound by residues Thr-31, Arg-36, 57–59, 86–89, and Gln-93; these read ELV and GYPR. An LID region spans residues 127–159; sequence GRIINRKTGETFHKVFNPPVDYKEEDYYQREDD. Residues Arg-128 and 137 to 138 contribute to the ATP site; that span reads TF. AMP contacts are provided by Arg-156 and Arg-167. Gln-195 is an ATP binding site.

Monomer.

It is found in the cytoplasm. It carries out the reaction AMP + ATP = 2 ADP. Its pathway is purine metabolism; AMP biosynthesis via salvage pathway; AMP from ADP: step 1/1. Functionally, catalyzes the reversible transfer of the terminal phosphate group between ATP and AMP. Plays an important role in cellular energy homeostasis and in adenine nucleotide metabolism. The polypeptide is Adenylate kinase (Streptococcus pyogenes serotype M6 (strain ATCC BAA-946 / MGAS10394)).